A 219-amino-acid polypeptide reads, in one-letter code: Ribosomal RNA large subunit methyltransferase E (219 aa).

The S-adenosyl-L-methionine site is built by G60, W62, D85, D101, and D126. K166 acts as the Proton acceptor in catalysis.

The protein belongs to the class I-like SAM-binding methyltransferase superfamily. RNA methyltransferase RlmE family.

The protein localises to the cytoplasm. The enzyme catalyses uridine(2552) in 23S rRNA + S-adenosyl-L-methionine = 2'-O-methyluridine(2552) in 23S rRNA + S-adenosyl-L-homocysteine + H(+). Specifically methylates the uridine in position 2552 of 23S rRNA at the 2'-O position of the ribose in the fully assembled 50S ribosomal subunit. The chain is Ribosomal RNA large subunit methyltransferase E from Bordetella avium (strain 197N).